The following is a 166-amino-acid chain: Large ribosomal subunit protein uL10 (166 aa).

The protein belongs to the universal ribosomal protein uL10 family. In terms of assembly, part of the ribosomal stalk of the 50S ribosomal subunit. The N-terminus interacts with L11 and the large rRNA to form the base of the stalk. The C-terminus forms an elongated spine to which L12 dimers bind in a sequential fashion forming a multimeric L10(L12)X complex.

In terms of biological role, forms part of the ribosomal stalk, playing a central role in the interaction of the ribosome with GTP-bound translation factors. The protein is Large ribosomal subunit protein uL10 of Staphylococcus aureus (strain JH1).